Consider the following 110-residue polypeptide: MARVTVEDCLDHVENRFELVLIAAKRAHQLSSGGYKPLLNAGKDKPTVVALREIEAGLIDSSILSEIYVIDEQLSAQQKVLDSVKMSEIKDELSVTAVDKVIDEITEIEE.

This sequence belongs to the RNA polymerase subunit omega family. The RNAP catalytic core consists of 2 alpha, 1 beta, 1 beta' and 1 omega subunit. When a sigma factor is associated with the core the holoenzyme is formed, which can initiate transcription.

The enzyme catalyses RNA(n) + a ribonucleoside 5'-triphosphate = RNA(n+1) + diphosphate. Functionally, promotes RNA polymerase assembly. Latches the N- and C-terminal regions of the beta' subunit thereby facilitating its interaction with the beta and alpha subunits. This Vesicomyosocius okutanii subsp. Calyptogena okutanii (strain HA) protein is DNA-directed RNA polymerase subunit omega.